Consider the following 394-residue polypeptide: NAD(P)H-quinone oxidoreductase subunit H (394 aa).

It belongs to the complex I 49 kDa subunit family. In terms of assembly, NDH-1 can be composed of about 15 different subunits; different subcomplexes with different compositions have been identified which probably have different functions.

It localises to the cellular thylakoid membrane. The enzyme catalyses a plastoquinone + NADH + (n+1) H(+)(in) = a plastoquinol + NAD(+) + n H(+)(out). The catalysed reaction is a plastoquinone + NADPH + (n+1) H(+)(in) = a plastoquinol + NADP(+) + n H(+)(out). Its function is as follows. NDH-1 shuttles electrons from an unknown electron donor, via FMN and iron-sulfur (Fe-S) centers, to quinones in the respiratory and/or the photosynthetic chain. The immediate electron acceptor for the enzyme in this species is believed to be plastoquinone. Couples the redox reaction to proton translocation, and thus conserves the redox energy in a proton gradient. Cyanobacterial NDH-1 also plays a role in inorganic carbon-concentration. The polypeptide is NAD(P)H-quinone oxidoreductase subunit H (Synechococcus sp. (strain JA-3-3Ab) (Cyanobacteria bacterium Yellowstone A-Prime)).